A 120-amino-acid chain; its full sequence is Large ribosomal subunit protein uL18 (120 aa).

The protein belongs to the universal ribosomal protein uL18 family. In terms of assembly, part of the 50S ribosomal subunit; part of the 5S rRNA/L5/L18/L25 subcomplex. Contacts the 5S and 23S rRNAs.

Its function is as follows. This is one of the proteins that bind and probably mediate the attachment of the 5S RNA into the large ribosomal subunit, where it forms part of the central protuberance. The chain is Large ribosomal subunit protein uL18 from Agrobacterium fabrum (strain C58 / ATCC 33970) (Agrobacterium tumefaciens (strain C58)).